Reading from the N-terminus, the 278-residue chain is Envelope glycoprotein L (278 aa).

Positions 1 to 32 are cleaved as a signal peptide; that stretch reads MCRRPDCGFSFSPGPVILLWCCLLLSIVSSAA. The region spanning 43 to 256 is the gL betaherpesvirus-type domain; it reads VPAECPELTR…DKYYAGLPPE (214 aa). Cys154 and Cys159 are joined by a disulfide.

The protein belongs to the herpesviridae glycoprotein L (gL) family. Betaherpesvirinae gL subfamily. As to quaternary structure, interacts with glycoprotein H (gH); this interaction is necessary for the correct processing and cell surface expression of gH. Forms the envelope pentamer complex (PC) composed of gH, gL, UL128, UL130, and UL131A. The pentamer interacts with host NRP2. Forms the envelope trimer complex composed of gH, gL, and gO. The trimer interacts with host PDGFRA. The trimer also interacts with host EPHA2.

It localises to the virion membrane. The protein localises to the host cell membrane. It is found in the host Golgi apparatus. Its subcellular location is the host trans-Golgi network. In terms of biological role, the heterodimer glycoprotein H-glycoprotein L is required for the fusion of viral and plasma membranes leading to virus entry into the host cell. Acts as a functional inhibitor of gH and maintains gH in an inhibited form. Upon binding to host integrins, gL dissociates from gH leading to activation of the viral fusion glycoproteins gB and gH. In human cytomegalovirus, forms two distincts complexes to mediate viral entry, a trimer and a pentamer at the surface of the virion envelope. The gH-gL-gO trimer is required for infection in fibroblasts by interacting with host PDGFRA, and in glioblastoma cells by interacting with host EPHA2. The gH-gL-UL128-UL130-UL131A pentamer is essential for viral entry in epithelial, endothelial and myeloid cells via interaction with host NRP2. This is Envelope glycoprotein L from Human cytomegalovirus (strain 119) (HHV-5).